The following is a 158-amino-acid chain: uncharacterized protein (158 aa).

3 helical membrane-spanning segments follow: residues 45–65, 76–96, and 106–126; these read GIFF…PAVI, LAIG…IFAW, and FILV…VFAL.

It to U.parvum UU007, UU041 and UU042.

It is found in the cell membrane. This is an uncharacterized protein from Ureaplasma parvum serovar 3 (strain ATCC 700970).